Consider the following 642-residue polypeptide: Sodium- and chloride-dependent neutral and basic amino acid transporter B(0+) (642 aa).

At 1–44 the chain is on the cytoplasmic side; sequence MDKLKCPSFFKCREKEKVSASSENFHVGENDENQDRGNWSKKSD. Transmembrane regions (helical) follow at residues 45-65, 72-92, and 110-130; these read YLLSMIGYAVGLGNVWRFPYL, GAFLIPYAIMLALAGLPLFFL, and ILPLFQGVGITMVLISIFVTI. The Extracellular portion of the chain corresponds to 131-234; sequence YYNVIIAYSL…RSSGMNETGV (104 aa). Residues Asn155, Asn163, Asn174, Asn189, Asn197, Asn202, and Asn230 are each glycosylated (N-linked (GlcNAc...) asparagine). Helical transmembrane passes span 235-255 and 261-281; these read IVWYLALCLLLAWLIVGAALF and SGKVVYFTALFPYVVLLILLV. An N-linked (GlcNAc...) asparagine glycan is attached at Asn302. 7 consecutive transmembrane segments (helical) span residues 315–335, 348–368, 399–419, 450–477, 480–500, 528–548, and 563–583; these read AATQIFYSLSVAWGGLVALSS, IVVCLTNCLTSVFAGFAIFSI, LAQLPGGPFWSILFFFMLLTL, ITLGCCLVLFLLGLVCVTQAGIYWVHLI, FCAGWGILIAAILELVGIIWI, CWFVITPILLIAIFIWSLVQF, and VALGWCMIVFCIIWIPIMAII. Topologically, residues 584 to 642 are cytoplasmic; sequence KIIQAKGNIFQRLISCCRPASNWGPYLEQHRGERYKDMVDPKKEADHEIPTVSGSRKPE. Over residues 622 to 632 the composition is skewed to basic and acidic residues; sequence VDPKKEADHEI. A disordered region spans residues 622–642; the sequence is VDPKKEADHEIPTVSGSRKPE.

Belongs to the sodium:neurotransmitter symporter (SNF) (TC 2.A.22) family. SLC6A14 subfamily. In terms of tissue distribution, levels are highest in adult and fetal lung, in trachea and salivary gland. Lower levels detected in mammary gland, stomach and pituitary gland, and very low levels in colon, uterus, prostate and testis.

It localises to the membrane. The protein resides in the apical cell membrane. The enzyme catalyses glycine(out) + chloride(out) + 2 Na(+)(out) = glycine(in) + chloride(in) + 2 Na(+)(in). It catalyses the reaction L-leucine(out) + chloride(out) + 2 Na(+)(out) = L-leucine(in) + chloride(in) + 2 Na(+)(in). It carries out the reaction L-glutamine(out) + chloride(out) + 2 Na(+)(out) = L-glutamine(in) + chloride(in) + 2 Na(+)(in). The catalysed reaction is L-arginine(out) + chloride(out) + 2 Na(+)(out) = L-arginine(in) + chloride(in) + 2 Na(+)(in). The enzyme catalyses (R)-carnitine(out) + chloride(out) + 2 Na(+)(out) = (R)-carnitine(in) + chloride(in) + 2 Na(+)(in). It catalyses the reaction O-butanoyl-(R)-carnitine(out) + chloride(out) + 2 Na(+)(out) = O-butanoyl-(R)-carnitine(in) + chloride(in) + 2 Na(+)(in). It carries out the reaction O-propanoyl-(R)-carnitine(out) + chloride(out) + 2 Na(+)(out) = O-propanoyl-(R)-carnitine(in) + chloride(in) + 2 Na(+)(in). The catalysed reaction is L-isoleucine(out) + chloride(out) + 2 Na(+)(out) = L-isoleucine(in) + chloride(in) + 2 Na(+)(in). The enzyme catalyses L-methionine(out) + chloride(out) + 2 Na(+)(out) = L-methionine(in) + chloride(in) + 2 Na(+)(in). It catalyses the reaction L-valine(out) + chloride(out) + 2 Na(+)(out) = L-valine(in) + chloride(in) + 2 Na(+)(in). It carries out the reaction L-alanine(out) + chloride(out) + 2 Na(+)(out) = L-alanine(in) + chloride(in) + 2 Na(+)(in). The catalysed reaction is L-serine(out) + chloride(out) + 2 Na(+)(out) = L-serine(in) + chloride(in) + 2 Na(+)(in). The enzyme catalyses L-cysteine(out) + chloride(out) + 2 Na(+)(out) = L-cysteine(in) + chloride(in) + 2 Na(+)(in). It catalyses the reaction L-asparagine(out) + chloride(out) + 2 Na(+)(out) = L-asparagine(in) + chloride(in) + 2 Na(+)(in). It carries out the reaction L-threonine(out) + chloride(out) + 2 Na(+)(out) = L-threonine(in) + chloride(in) + 2 Na(+)(in). The catalysed reaction is L-phenylalanine(out) + chloride(out) + 2 Na(+)(out) = L-phenylalanine(in) + chloride(in) + 2 Na(+)(in). The enzyme catalyses L-tryptophan(out) + chloride(out) + 2 Na(+)(out) = L-tryptophan(in) + chloride(in) + 2 Na(+)(in). It catalyses the reaction L-tyrosine(out) + chloride(out) + 2 Na(+)(out) = L-tyrosine(in) + chloride(in) + 2 Na(+)(in). It carries out the reaction L-histidine(out) + chloride(out) + 2 Na(+)(out) = L-histidine(in) + chloride(in) + 2 Na(+)(in). The catalysed reaction is L-lysine(out) + chloride(out) + 2 Na(+)(out) = L-lysine(in) + chloride(in) + 2 Na(+)(in). The enzyme catalyses beta-alanine(out) + chloride(out) + 2 Na(+)(out) = beta-alanine(in) + chloride(in) + 2 Na(+)(in). Amino acid transporter that plays an important role in the absorption of amino acids in the intestinal tract. Mediates the uptake of a broad range of neutral and cationic amino acids (with the exception of proline) in a Na(+)/Cl(-)-dependent manner. Transports non-alpha-amino acids such as beta-alanine with low affinity, and has a higher affinity for dipolar and cationic amino acids such as leucine and lysine. Can also transport carnitine, butirylcarnitine and propionylcarnitine coupled to the transmembrane gradients of Na(+) and Cl(-). The polypeptide is Sodium- and chloride-dependent neutral and basic amino acid transporter B(0+) (Homo sapiens (Human)).